A 710-amino-acid chain; its full sequence is Methionine--tRNA ligase (710 aa).

Residues 16 to 26 carry the 'HIGH' region motif; sequence PYANGAFHIGH. Cys-147, Cys-150, Cys-160, and Cys-163 together coordinate Zn(2+). A 'KMSKS' region motif is present at residues 350-354; the sequence is KMSKS. Residue Lys-353 participates in ATP binding. Positions 604-710 constitute a tRNA-binding domain; that stretch reads DFAKIDLRIA…PGAEPGMRVG (107 aa).

It belongs to the class-I aminoacyl-tRNA synthetase family. MetG type 1 subfamily. As to quaternary structure, homodimer. The cofactor is Zn(2+).

It localises to the cytoplasm. It catalyses the reaction tRNA(Met) + L-methionine + ATP = L-methionyl-tRNA(Met) + AMP + diphosphate. Its function is as follows. Is required not only for elongation of protein synthesis but also for the initiation of all mRNA translation through initiator tRNA(fMet) aminoacylation. This is Methionine--tRNA ligase from Herminiimonas arsenicoxydans.